A 120-amino-acid chain; its full sequence is V-type proton ATPase subunit F (120 aa).

Belongs to the V-ATPase F subunit family. V-ATPase is a heteromultimeric enzyme composed of a peripheral catalytic V1 complex (components A to H) attached to an integral membrane V0 proton pore complex (components: a, c, c', c'' and d).

In terms of biological role, subunit of the peripheral V1 complex of vacuolar ATPase essential for assembly or catalytic function. V-ATPase is responsible for acidifying a variety of intracellular compartments in eukaryotic cells. The polypeptide is V-type proton ATPase subunit F (vatF) (Dictyostelium discoideum (Social amoeba)).